We begin with the raw amino-acid sequence, 272 residues long: Dihydropteroate synthase (272 aa).

The Pterin-binding domain occupies 1–251 (MIKTKIMGIL…GVRVHNVLLN (251 aa)). Asparagine 11 serves as a coordination point for Mg(2+). (7,8-dihydropterin-6-yl)methyl diphosphate is bound by residues threonine 51, aspartate 89, asparagine 108, aspartate 172, lysine 208, and 244 to 246 (RVH).

Belongs to the DHPS family. In terms of assembly, homodimer. The cofactor is Mg(2+).

The catalysed reaction is (7,8-dihydropterin-6-yl)methyl diphosphate + 4-aminobenzoate = 7,8-dihydropteroate + diphosphate. It functions in the pathway cofactor biosynthesis; tetrahydrofolate biosynthesis; 7,8-dihydrofolate from 2-amino-4-hydroxy-6-hydroxymethyl-7,8-dihydropteridine diphosphate and 4-aminobenzoate: step 1/2. In terms of biological role, catalyzes the condensation of para-aminobenzoate (pABA) with 6-hydroxymethyl-7,8-dihydropterin diphosphate (DHPt-PP) to form 7,8-dihydropteroate (H2Pte), the immediate precursor of folate derivatives. This Staphylococcus epidermidis (strain ATCC 35984 / DSM 28319 / BCRC 17069 / CCUG 31568 / BM 3577 / RP62A) protein is Dihydropteroate synthase (folP).